The following is a 221-amino-acid chain: CASP-like protein 4B1 (221 aa).

Residues 1–78 are disordered; sequence MAMQLHAASP…HDHHGGGGGG (78 aa). Residues 1–87 are Cytoplasmic-facing; that stretch reads MAMQLHAASP…GDEATQLLNG (87 aa). Residues 19–33 are compositionally biased toward pro residues; it reads SPPPPPPLSPHPEPA. Low complexity predominate over residues 50 to 62; sequence APVATATTPLTPG. A helical membrane pass occupies residues 88–108; sequence IVLVLRAGAALLSFVAMALVA. Residues 109–125 are Extracellular-facing; that stretch reads SCRHGDWMDFLRYQEYR. Residues 126-146 form a helical membrane-spanning segment; it reads YLLGVSVVAFVYSAAQALKNF. At 147 to 160 the chain is on the cytoplasmic side; that stretch reads RRRRRGAADASFLD. Residues 161-181 form a helical membrane-spanning segment; it reads FAGDQAVAYLLVTASAAALPI. Residues 182-196 are Extracellular-facing; it reads TIRMRSAVVNVFTDA. A helical transmembrane segment spans residues 197-217; sequence IAASIALGFLAFAALALSAML. Over 218–221 the chain is Cytoplasmic; it reads SRHA.

This sequence belongs to the Casparian strip membrane proteins (CASP) family. Homodimer and heterodimers.

Its subcellular location is the cell membrane. The chain is CASP-like protein 4B1 from Hordeum vulgare subsp. vulgare (Domesticated barley).